A 138-amino-acid chain; its full sequence is Putative pre-16S rRNA nuclease (138 aa).

Belongs to the YqgF nuclease family.

Its subcellular location is the cytoplasm. Could be a nuclease involved in processing of the 5'-end of pre-16S rRNA. This Haemophilus ducreyi (strain 35000HP / ATCC 700724) protein is Putative pre-16S rRNA nuclease.